We begin with the raw amino-acid sequence, 153 residues long: Small ribosomal subunit protein bS16 (153 aa).

Residues 114 to 153 form a disordered region; sequence ENEPVGEAITPKKKKAKAEDAEAAADAPAEAAAESEAADK. Positions 137 to 153 are enriched in low complexity; that stretch reads AADAPAEAAAESEAADK.

It belongs to the bacterial ribosomal protein bS16 family.

The sequence is that of Small ribosomal subunit protein bS16 from Rhodococcus opacus (strain B4).